The chain runs to 342 residues: Deoxyhypusine synthase regulatory subunit (342 aa).

Residues 72-76, 98-100, Glu-104, Asp-213, 282-283, and 316-317 each bind NAD(+); these read SNLIS, TAG, TG, and DA.

This sequence belongs to the deoxyhypusine synthase family. As to quaternary structure, heterotetramer formed by a homodimer of the non-catalytic regulatory subunit DHSp and a homodimer of the catalytic subunit DHSc where DHSc appears to bind spermidine and DHSp appears to bind NAD(+).

The protein operates within protein modification; eIF5A hypusination. Its function is as follows. Required for the activation and stability of deoxyhypusine synthase DHSc. Required for cell growth and survival. In Trypanosoma brucei brucei (strain 927/4 GUTat10.1), this protein is Deoxyhypusine synthase regulatory subunit.